The chain runs to 635 residues: Thrombopoietin receptor (635 aa).

A signal peptide spans 1–25 (MPSWALFMVTSCLLLAPQNLAQVSS). Over 26 to 491 (QDVSLLASDS…RVETATETAW (466 aa)) the chain is Extracellular. 2 disulfides stabilise this stretch: Cys40–Cys50 and Cys77–Cys93. N-linked (GlcNAc...) asparagine glycosylation is found at Asn117 and Asn178. The 110-residue stretch at 172–281 (GPRDPKNSTG…WSLPVTVDLP (110 aa)) folds into the Fibronectin type-III 1 domain. 4 disulfide bridges follow: Cys193–Cys323, Cys194–Cys241, Cys291–Cys301, and Cys334–Cys352. The disordered stretch occupies residues 205–232 (ALDQSPCAQPTMPWQDGPKQTSPSREAS). Asn298 carries an N-linked (GlcNAc...) asparagine glycan. N-linked (GlcNAc...) asparagine glycosylation occurs at Asn358. Positions 392-486 (PTPNLHWREI…WSDPTRVETA (95 aa)) constitute a Fibronectin type-III 2 domain. The short motif at 474–478 (WSSWS) is the WSXWS motif element. The chain crosses the membrane as a helical span at residues 492–513 (ISLVTALHLVLGLSAVLGLLLL). Residues 514-635 (RWQFPAHYRR…YLPLSYWQQP (122 aa)) lie on the Cytoplasmic side of the membrane. A Box 1 motif motif is present at residues 528-536 (LWPSLPDLH). Glycyl lysine isopeptide (Lys-Gly) (interchain with G-Cter in ubiquitin) cross-links involve residues Lys553 and Lys573. Phosphotyrosine occurs at positions 591, 626, and 631.

The protein belongs to the type I cytokine receptor family. Type 1 subfamily. In terms of assembly, homodimer. Interacts with ATXN2L. Interacts with JAK2 and TYK2; these interactions increase MPL localization to the cell membrane. Interacts with THPO. Interacts with SHIP/INPP5D. Interacts with BTK. Interacts with SYK; this interaction negatively regulates THPO-mediated ERK1/2 signaling. Post-translationally, phosphorylated at Tyr-591 in response to THPO stimulation. In terms of processing, ubiquitination at Lys-553 and Lys-573 targets MPL for degradation by both the lysosomal and proteasomal pathways. The E3 ubiquitin-protein ligase CBL significantly contributes to this ubiquitination. As to expression, expressed at a low level in a large number of cells of hematopoietic origin. Isoform 1 and isoform 2 are always found to be coexpressed.

Its subcellular location is the cell membrane. It is found in the golgi apparatus. The protein localises to the cell surface. Receptor for thrombopoietin that regulates hematopoietic stem cell renewal, megakaryocyte differentiation, and platelet formation. Upon activation by THPO, induces rapid tyrosine phosphorylation and activation of JAK2, providing docking sites for many signaling proteins such as STAT5, SHIP/INPP5D, GRB2, SOS1 and PI3K. In turn, These signaling cascades lead to the proliferation, survival, and differentiation of megakaryocytes, ultimately leading to increased platelet production. The sequence is that of Thrombopoietin receptor (MPL) from Homo sapiens (Human).